The following is a 307-amino-acid chain: D-alanine--D-alanine ligase (307 aa).

Residues Lys-105–Glu-304 enclose the ATP-grasp domain. Val-135–Thr-190 serves as a coordination point for ATP. Mg(2+) is bound by residues Asp-258, Glu-271, and Asn-273.

It belongs to the D-alanine--D-alanine ligase family. Requires Mg(2+) as cofactor. Mn(2+) is required as a cofactor.

Its subcellular location is the cytoplasm. The enzyme catalyses 2 D-alanine + ATP = D-alanyl-D-alanine + ADP + phosphate + H(+). It participates in cell wall biogenesis; peptidoglycan biosynthesis. Its function is as follows. Cell wall formation. The polypeptide is D-alanine--D-alanine ligase (Actinobacillus succinogenes (strain ATCC 55618 / DSM 22257 / CCUG 43843 / 130Z)).